The following is a 305-amino-acid chain: DNA-directed RNA polymerase 35 kDa subunit (305 aa).

It belongs to the poxviridae DNA-directed RNA polymerase 35 kDa subunit family. The DNA-dependent RNA polymerase used for intermediate and late genes expression consists of eight subunits 147 kDa, 133 kDa, 35 kDa, 30 kDa, 22 kDa, 19 kDa, 18 kDa and 7 kDa totalling more than 500 kDa in mass. The same holoenzyme, with the addition of the transcription-specificity factor RAP94, is used for early gene expression.

Its subcellular location is the virion. The catalysed reaction is RNA(n) + a ribonucleoside 5'-triphosphate = RNA(n+1) + diphosphate. Part of the DNA-dependent RNA polymerase which catalyzes the transcription of viral DNA into RNA using the four ribonucleoside triphosphates as substrates. Responsible for the transcription of early, intermediate and late genes. DNA-dependent RNA polymerase associates with the early transcription factor (ETF), itself composed of D6 and A7, thereby allowing the early genes transcription. Late transcription, and probably also intermediate transcription, require newly synthesized RNA polymerase. This is DNA-directed RNA polymerase 35 kDa subunit (OPG156) from Variola virus (isolate Human/India/Ind3/1967) (VARV).